A 206-amino-acid chain; its full sequence is Ribosomal RNA small subunit methyltransferase G (206 aa).

S-adenosyl-L-methionine contacts are provided by residues G74, L79, 125–126 (VE), and R140.

It belongs to the methyltransferase superfamily. RNA methyltransferase RsmG family.

The protein localises to the cytoplasm. The enzyme catalyses guanosine(527) in 16S rRNA + S-adenosyl-L-methionine = N(7)-methylguanosine(527) in 16S rRNA + S-adenosyl-L-homocysteine. Functionally, specifically methylates the N7 position of guanine in position 527 of 16S rRNA. The sequence is that of Ribosomal RNA small subunit methyltransferase G from Shewanella amazonensis (strain ATCC BAA-1098 / SB2B).